The primary structure comprises 236 residues: Purine nucleoside phosphorylase DeoD-type (236 aa).

A purine D-ribonucleoside is bound at residue histidine 5. Residues glycine 21, arginine 25, arginine 44, and 88-91 (RVGT) contribute to the phosphate site. A purine D-ribonucleoside-binding positions include 180 to 182 (EME) and 204 to 205 (SD). Aspartate 205 acts as the Proton donor in catalysis.

Belongs to the PNP/UDP phosphorylase family. In terms of assembly, homohexamer; trimer of homodimers.

The catalysed reaction is a purine D-ribonucleoside + phosphate = a purine nucleobase + alpha-D-ribose 1-phosphate. It carries out the reaction a purine 2'-deoxy-D-ribonucleoside + phosphate = a purine nucleobase + 2-deoxy-alpha-D-ribose 1-phosphate. In terms of biological role, catalyzes the reversible phosphorolytic breakdown of the N-glycosidic bond in the beta-(deoxy)ribonucleoside molecules, with the formation of the corresponding free purine bases and pentose-1-phosphate. This is Purine nucleoside phosphorylase DeoD-type from Shewanella baltica (strain OS223).